The primary structure comprises 600 residues: E3 ubiquitin-protein ligase RLIM (600 aa).

Methionine 1 carries the N-acetylmethionine modification. Positions 1–11 (MENSDSNDKGS) are enriched in basic and acidic residues. Disordered stretches follow at residues 1 to 24 (MENSDSNDKGSDQSAAQRRSQMDR), 49 to 355 (NNLL…ERGG), and 417 to 497 (SDSE…VTFD). Composition is skewed to polar residues over residues 103–131 (SVRQTGNTTRSGQRGNQSWRAVSRTNPNS) and 140–152 (INVNRNNGSQTSE). Phosphoserine is present on serine 163. The segment covering 166-175 (NMESSSQRQM) has biased composition (polar residues). Positions 176 to 187 (ENSASESASARP) are enriched in low complexity. 3 positions are modified to phosphoserine: serine 194, serine 227, and serine 229. Residues 213–228 (RSPEHRRTRARAERSR) show a composition bias toward basic and acidic residues. Over residues 244-255 (LEQSSENEPEGS) the composition is skewed to polar residues. The residue at position 269 (serine 269) is a Phosphoserine. Low complexity predominate over residues 288-306 (SQGTSSSDTGSNSESSGSG). The segment covering 322–332 (RPGEYRQRDSI) has biased composition (basic and acidic residues). Over residues 333–349 (ASRTRSRSQAPNNTVTY) the composition is skewed to polar residues. The span at 448-475 (SGSSSSSSPSPSSSGESSESSSEMFEGS) shows a compositional bias: low complexity. The RING-type zinc finger occupies 546 to 587 (CSVCITEYTEGNKLRKLPCSHEYHVHCIDRWLSENSTCPICR). Residues 597 to 600 (ESVV) carry the PDZ-binding motif.

This sequence belongs to the RNF12 family. As to quaternary structure, interacts (via N-terminus) with TERF1. Interacts (via C-terminus) with ESR1. Interacts with LIM/homeobox factors such as LHX3. Interacts with LDB1, LDB2 and SIN3A. Interacts with LIMK1.

Its subcellular location is the nucleus. The enzyme catalyses S-ubiquitinyl-[E2 ubiquitin-conjugating enzyme]-L-cysteine + [acceptor protein]-L-lysine = [E2 ubiquitin-conjugating enzyme]-L-cysteine + N(6)-ubiquitinyl-[acceptor protein]-L-lysine.. The protein operates within protein modification; protein ubiquitination. E3 ubiquitin-protein ligase that acts as a negative coregulator for LIM homeodomain transcription factors by mediating the ubiquitination and subsequent degradation of LIM cofactors LDB1 and LDB2 and by mediating the recruitment the SIN3a/histone deacetylase corepressor complex. Ubiquitination and degradation of LIM cofactors LDB1 and LDB2 allows DNA-bound LIM homeodomain transcription factors to interact with other protein partners such as RLIM. Plays a role in telomere length-mediated growth suppression by mediating the ubiquitination and degradation of TERF1. By targeting ZFP42 for degradation, acts as an activator of random inactivation of X chromosome in the embryo, a stochastic process in which one X chromosome is inactivated to minimize sex-related dosage differences of X-encoded genes in somatic cells of female placental mammals. This chain is E3 ubiquitin-protein ligase RLIM (Rlim), found in Mus musculus (Mouse).